Consider the following 239-residue polypeptide: ATP-dependent dethiobiotin synthetase BioD (239 aa).

15 to 20 lines the ATP pocket; the sequence is EIGKTF. Mg(2+) is bound at residue threonine 19. The active site involves lysine 40. Residues aspartate 57, 118–121, and 178–179 contribute to the ATP site; these read EGVG and NH. 2 residues coordinate Mg(2+): aspartate 57 and glutamate 118.

The protein belongs to the dethiobiotin synthetase family. Homodimer. Mg(2+) serves as cofactor.

It localises to the cytoplasm. It catalyses the reaction (7R,8S)-7,8-diammoniononanoate + CO2 + ATP = (4R,5S)-dethiobiotin + ADP + phosphate + 3 H(+). The protein operates within cofactor biosynthesis; biotin biosynthesis; biotin from 7,8-diaminononanoate: step 1/2. Its function is as follows. Catalyzes a mechanistically unusual reaction, the ATP-dependent insertion of CO2 between the N7 and N8 nitrogen atoms of 7,8-diaminopelargonic acid (DAPA, also called 7,8-diammoniononanoate) to form a ureido ring. In Burkholderia multivorans (strain ATCC 17616 / 249), this protein is ATP-dependent dethiobiotin synthetase BioD.